The chain runs to 363 residues: NADH-quinone oxidoreductase subunit H (363 aa).

The next 10 helical transmembrane spans lie at 29–49 (VLKI…YVVW), 62–82 (GPMY…KLLF), 96–116 (FIIA…VVPF), 127–147 (VGLL…ILAG), 163–183 (AAQV…VMIA), 202–222 (FFDW…VSGV), 238–257 (EIVA…LFFL), 264–286 (ILVS…QGWV), 299–319 (KGGW…YIWF), and 339–359 (FIPL…YGVI).

The protein belongs to the complex I subunit 1 family. As to quaternary structure, NDH-1 is composed of 14 different subunits. Subunits NuoA, H, J, K, L, M, N constitute the membrane sector of the complex.

It is found in the cell inner membrane. It catalyses the reaction a quinone + NADH + 5 H(+)(in) = a quinol + NAD(+) + 4 H(+)(out). NDH-1 shuttles electrons from NADH, via FMN and iron-sulfur (Fe-S) centers, to quinones in the respiratory chain. The immediate electron acceptor for the enzyme in this species is believed to be ubiquinone. Couples the redox reaction to proton translocation (for every two electrons transferred, four hydrogen ions are translocated across the cytoplasmic membrane), and thus conserves the redox energy in a proton gradient. This subunit may bind ubiquinone. This is NADH-quinone oxidoreductase subunit H from Xanthomonas oryzae pv. oryzae (strain PXO99A).